We begin with the raw amino-acid sequence, 187 residues long: Dihydrofolate reductase (187 aa).

The region spanning 4–185 is the DHFR domain; that stretch reads PLNCIVAVSQ…IKYKFEVYEK (182 aa). NADP(+) contacts are provided by residues Ala10 and 16–22; that span reads GIGKNGD. A substrate-binding site is contributed by 31–36; it reads EFKYFQ. Lys33 carries the N6-acetyllysine; alternate modification. N6-succinyllysine; alternate is present on Lys33. 55 to 57 is an NADP(+) binding site; that stretch reads RKT. Residue Arg71 participates in substrate binding. NADP(+)-binding positions include 77 to 79 and 117 to 124; these read SRE and GGSSVYQE.

The protein belongs to the dihydrofolate reductase family. As to quaternary structure, homodimer.

The protein localises to the mitochondrion. It is found in the cytoplasm. The catalysed reaction is (6S)-5,6,7,8-tetrahydrofolate + NADP(+) = 7,8-dihydrofolate + NADPH + H(+). Its pathway is cofactor biosynthesis; tetrahydrofolate biosynthesis; 5,6,7,8-tetrahydrofolate from 7,8-dihydrofolate: step 1/1. Key enzyme in folate metabolism. Contributes to the de novo mitochondrial thymidylate biosynthesis pathway. Catalyzes an essential reaction for de novo glycine and purine synthesis, and for DNA precursor synthesis. Binds its own mRNA. The polypeptide is Dihydrofolate reductase (Dhfr) (Rattus norvegicus (Rat)).